We begin with the raw amino-acid sequence, 95 residues long: MSFRPLHDRVVVKRLEGEEKTKGGIIIPDTAKEKPQEGEIIAVGPGGRDDSGKLTPLDVKAGDKVLFGKWSGTEVKIDGQDLLIMKESDILGVVA.

This sequence belongs to the GroES chaperonin family. Heptamer of 7 subunits arranged in a ring. Interacts with the chaperonin GroEL.

The protein resides in the cytoplasm. In terms of biological role, together with the chaperonin GroEL, plays an essential role in assisting protein folding. The GroEL-GroES system forms a nano-cage that allows encapsulation of the non-native substrate proteins and provides a physical environment optimized to promote and accelerate protein folding. GroES binds to the apical surface of the GroEL ring, thereby capping the opening of the GroEL channel. The protein is Co-chaperonin GroES of Methylocella silvestris (strain DSM 15510 / CIP 108128 / LMG 27833 / NCIMB 13906 / BL2).